The following is a 572-amino-acid chain: Na(+)/citrate cotransporter (572 aa).

The next 8 membrane-spanning stretches (helical) occupy residues 13–33, 53–73, 80–100, 124–144, 218–238, 255–275, 315–335, and 357–377; these read SFAILLFTPILMLPLVILIPD, VIPVAVTSLLPVLLFPLLKVL, IQYMKDTNMLFLGSLIVAVAV, LMLGFMFVTAFLSMWISNTAA, SASIGGTATLTGTGPNVVLLG, SWFGFAFPNMVMMLVLAWLWL, SLSYPECNVLFCFTLLVILWF, and HITDATVAIFVAILLFIIPSQ. A glycan (N-linked (GlcNAc...) asparagine) is linked at Asn-382. 4 helical membrane passes run 410–430, 443–463, 491–511, and 532–552; these read VPWDIVLLLGGGFAMAKGCET, PLRLVKPAVITLILSCLVAMT, PLYVMIPCTMSASLAFMLPVA, and TGLIMNFVGILSVFLSVNTWG. N-linked (GlcNAc...) asparagine glycosylation occurs at Asn-566.

Belongs to the SLC13A/DASS transporter (TC 2.A.47) family. NADC subfamily. In terms of assembly, homodimer.

The protein resides in the cell membrane. The catalysed reaction is citrate(out) + 4 Na(+)(out) = citrate(in) + 4 Na(+)(in). Inhibited by Li(+). High-affinity sodium/citrate cotransporter that mediates citrate entry into cells, which is a critical participant of biochemical pathways. May function in various metabolic processes in which citrate has a critical role such as energy production (Krebs cycle), fatty acid synthesis, cholesterol synthesis, glycolysis, and gluconeogenesis. Transports citrate into the cell in a Na(+)-dependent manner, recognizing the trivalent form of citrate (physiological pH) rather than the divalent form. Can recognizes succinate as a substrate, but its affinity for succinate is several fold lower than for citrate. The stoichiometry is probably 4 Na(+) for each carboxylate, irrespective of whether the translocated substrate is divalent or trivalent, rendering the process electrogenic. Involved in the regulation of citrate levels in the brain. The sequence is that of Na(+)/citrate cotransporter (Slc13a5) from Mus musculus (Mouse).